The chain runs to 204 residues: Urease accessory protein UreG (204 aa).

11–18 is a binding site for GTP; the sequence is GPVGAGKT.

The protein belongs to the SIMIBI class G3E GTPase family. UreG subfamily. In terms of assembly, homodimer. UreD, UreF and UreG form a complex that acts as a GTP-hydrolysis-dependent molecular chaperone, activating the urease apoprotein by helping to assemble the nickel containing metallocenter of UreC. The UreE protein probably delivers the nickel.

It is found in the cytoplasm. In terms of biological role, facilitates the functional incorporation of the urease nickel metallocenter. This process requires GTP hydrolysis, probably effectuated by UreG. This Staphylococcus epidermidis (strain ATCC 12228 / FDA PCI 1200) protein is Urease accessory protein UreG.